Here is a 300-residue protein sequence, read N- to C-terminus: Homoserine kinase (300 aa).

82–92 is a binding site for ATP; the sequence is RPGSGLGSSAA.

Belongs to the GHMP kinase family. Homoserine kinase subfamily.

It is found in the cytoplasm. The catalysed reaction is L-homoserine + ATP = O-phospho-L-homoserine + ADP + H(+). It functions in the pathway amino-acid biosynthesis; L-threonine biosynthesis; L-threonine from L-aspartate: step 4/5. Its function is as follows. Catalyzes the ATP-dependent phosphorylation of L-homoserine to L-homoserine phosphate. The polypeptide is Homoserine kinase (Methanocella arvoryzae (strain DSM 22066 / NBRC 105507 / MRE50)).